A 697-amino-acid polypeptide reads, in one-letter code: Trishanku (697 aa).

The tract at residues 1–94 (MEIEPVVRIS…NNNSNSNGTD (94 aa)) is disordered. Low complexity predominate over residues 12–47 (NGNNNQNNNNNNNNNTNNNSNNNNNNNNSSNINSTN). Over residues 58-72 (KMISNINNQKSPNPL) the composition is skewed to polar residues. Low complexity predominate over residues 73–91 (NSSVDDNNNTNNNNNSNSN). The 68-residue stretch at 122 to 189 (SDVIFKVGDR…ICIGILDLDY (68 aa)) folds into the BTB domain. The segment at 311–455 (IQQQQQQQQQ…DSANDDYEYS (145 aa)) is disordered. The span at 312–331 (QQQQQQQQQQLQSANGASGK) shows a compositional bias: low complexity. Residues 332-344 (SHGKRSSSSHLKK) show a composition bias toward basic residues. Residues 353 to 363 (GSCSSRCSSRR) show a composition bias toward low complexity. Acidic residues predominate over residues 416–453 (DDFENDSEDGDDDDEDDDEDDDFTDDDDKDDSANDDYE).

As to expression, expressed strongly in presumptive spore (prespore or psp) cells during the late G2 phase of cell cycle. Present at a low level in vegetative cells.

Its function is as follows. Required for normal morphogenesis and cell-type stability. The polypeptide is Trishanku (triA) (Dictyostelium discoideum (Social amoeba)).